The following is a 547-amino-acid chain: Nuclear speckle splicing regulatory protein 1 (547 aa).

The disordered stretch occupies residues lysine 25–lysine 51. Residues serine 27 and serine 33 each carry the phosphoserine modification. Residues isoleucine 103–lysine 177 adopt a coiled-coil conformation. The segment at asparagine 105 to alanine 169 is necessary for alternative splicing activity. A disordered region spans residues asparagine 188–serine 523. Glycyl lysine isopeptide (Lys-Gly) (interchain with G-Cter in SUMO2) cross-links involve residues lysine 198 and lysine 209. Residues serine 200–proline 217 show a composition bias toward basic and acidic residues. The span at glutamate 223–leucine 232 shows a compositional bias: polar residues. The segment covering glutamate 237 to aspartate 254 has biased composition (acidic residues). A phosphoserine mark is found at serine 247 and serine 252. The span at aspartate 255–glutamate 269 shows a compositional bias: basic and acidic residues. N6-acetyllysine is present on lysine 276. Over residues tyrosine 277 to serine 287 the composition is skewed to basic residues. Residue lysine 279 forms a Glycyl lysine isopeptide (Lys-Gly) (interchain with G-Cter in SUMO2) linkage. Positions arginine 308 to serine 339 are enriched in basic and acidic residues. The segment covering serine 340 to arginine 355 has biased composition (basic residues). Composition is skewed to basic and acidic residues over residues histidine 356 to arginine 480 and arginine 490 to proline 506. Residues lysine 376 to arginine 417 adopt a coiled-coil conformation. Residue serine 447 is modified to Phosphoserine.

This sequence belongs to the NSRP1 family. As to quaternary structure, interacts (via C-terminus) with SRSF1. Interacts (via C-terminus) with SRSF2.

The protein localises to the nucleus. It is found in the nucleus speckle. Functionally, RNA-binding protein that mediates pre-mRNA alternative splicing regulation. In Rattus norvegicus (Rat), this protein is Nuclear speckle splicing regulatory protein 1 (Nsrp1).